A 541-amino-acid polypeptide reads, in one-letter code: MDLYLLASGRKFGVVKSDCISNNGVNVKDVGNALNEGVVGAIDATRKMVVSLGTVMPEIQKCGVTFEESSEDVSDFYLVRWDSIDDPLNPKNWPMWKKWIVVVQISLIAFVVTFGSSVYSSGIGNVSMDFGVSISVSSLGSCVFLVGFGFGSLPFAPLSGIYGRFVVYFCTLLMFTLFQIGGGCAQNIWTLVILRFFQGFFGSTPLSNCGGTLSDLFTPIQRTYVLPGFCTFPFLGPIFGPIIGDFICQSYLGWCWVFWINMIMGAVVIVIIFFFMPETHGDTILDYKARYLRNKTRNMKWHTIHERQRNPRSAIYQACTDSVSLLITEPIVVCFTLYLTVVYIIGYIDFEGYPIVFAKYSFDQGEIGLSFIGIGIGIVLAGACTPIIYVHYNRVYTRRNGVMSPEDRLYPLFFGSIMLPISMFWFAWTCYPYHPYVHWIVPLISSIFFGWSLLFVFFVSYNYIIDSYQKLAASALAAATLVRYAASGGMSLVGRPMYVNLGDHWATSLLGFISVGMIPIPFLFFIYGKKIRGLSKHAYKL.

12 helical membrane-spanning segments follow: residues 99–119 (WIVV…SSVY), 131–153 (GVSI…FGSL), 165–185 (FVVY…GGCA), 187–207 (NIWT…TPLS), 224–244 (YVLP…PIIG), 256–276 (WVFW…FFFM), 325–345 (LLIT…VYII), 367–387 (IGLS…CTPI), 409–429 (LYPL…FAWT), 439–459 (WIVP…VFFV), 472–494 (AASA…SLVG), and 508–528 (SLLG…FIYG).

Belongs to the major facilitator superfamily. CAR1 family.

The protein resides in the membrane. This is an uncharacterized protein from Schizosaccharomyces pombe (strain 972 / ATCC 24843) (Fission yeast).